We begin with the raw amino-acid sequence, 520 residues long: Glutamyl-tRNA(Gln) amidotransferase subunit A (520 aa).

Catalysis depends on charge relay system residues lysine 80 and serine 155. The active-site Acyl-ester intermediate is the serine 179.

This sequence belongs to the amidase family. GatA subfamily. As to quaternary structure, heterotrimer of A, B and C subunits.

The enzyme catalyses L-glutamyl-tRNA(Gln) + L-glutamine + ATP + H2O = L-glutaminyl-tRNA(Gln) + L-glutamate + ADP + phosphate + H(+). Functionally, allows the formation of correctly charged Gln-tRNA(Gln) through the transamidation of misacylated Glu-tRNA(Gln) in organisms which lack glutaminyl-tRNA synthetase. The reaction takes place in the presence of glutamine and ATP through an activated gamma-phospho-Glu-tRNA(Gln). This is Glutamyl-tRNA(Gln) amidotransferase subunit A from Renibacterium salmoninarum (strain ATCC 33209 / DSM 20767 / JCM 11484 / NBRC 15589 / NCIMB 2235).